The primary structure comprises 493 residues: MSVHAPAPFAPSAPLRLFNSLTRQLEAFQPVHAGEARVYSCGPTVYNYPHIGNMRAYVFADLLGRTLSFKGLKLTHVINITDVGHLTDDADEGEDKMEKMARAEARSIWDIAKHYTQAYWEDVKALNIRQPARWTIATEYVPQMIAFAERIAAKHCYELDSGLYFDVSTVADYGRLARAQTEEGEGRIEAVEGKRNGADFAIWRKTPPGEKRQMEWDSPWGRGAPGWHLECSVMSGEVLGFPFDIHTGGIDHREIHHPNEIAQNQAFCCTNGLDVPANSGARIWMHNNFLVERSGKMSKSSGEFLRLQLLIDKGYHPLAYRLMCLQAHYRSELEFSWEGLGAALTRLKRMLIAVGQLKERAPEVAAQPGPRFTPFLERFDAAMSDDLNTAVALTVFEEVLGLKKVDPADKLAAVAAMDAVLGLGLLELDRRALRIRPKGVEIDEAGIEALLDARKAARAEKDFARSDALRDQIAAKGVEVMDGDPLGWEWKLA.

Position 41 (cysteine 41) interacts with Zn(2+). A 'HIGH' region motif is present at residues 43 to 53 (PTVYNYPHIGN). Residues cysteine 231, histidine 256, and glutamate 260 each contribute to the Zn(2+) site. Residues 296–300 (KMSKS) carry the 'KMSKS' region motif. Lysine 299 serves as a coordination point for ATP.

Belongs to the class-I aminoacyl-tRNA synthetase family. Monomer. It depends on Zn(2+) as a cofactor.

It localises to the cytoplasm. The catalysed reaction is tRNA(Cys) + L-cysteine + ATP = L-cysteinyl-tRNA(Cys) + AMP + diphosphate. The chain is Cysteine--tRNA ligase from Novosphingobium aromaticivorans (strain ATCC 700278 / DSM 12444 / CCUG 56034 / CIP 105152 / NBRC 16084 / F199).